A 562-amino-acid polypeptide reads, in one-letter code: Apical membrane antigen 1 (562 aa).

The N-terminal stretch at 1 to 21 (MNKIYCILFLSAQCLVHMGKC) is a signal peptide. Residues 22-484 (EPNQKPSRLT…QYAQGESKNQ (463 aa)) lie on the Extracellular side of the membrane. N-linked (GlcNAc...) asparagine glycans are attached at residues asparagine 84 and asparagine 176. Disulfide bonds link cysteine 94-cysteine 247, cysteine 162-cysteine 192, cysteine 208-cysteine 220, cysteine 265-cysteine 363, cysteine 282-cysteine 354, cysteine 388-cysteine 444, cysteine 432-cysteine 449, and cysteine 434-cysteine 451. N-linked (GlcNAc...) asparagine glycosylation occurs at asparagine 226. 2 N-linked (GlcNAc...) asparagine glycosylation sites follow: asparagine 405 and asparagine 441. Residues 485–507 (MLLIIIGITGGVCVVALASMFYF) form a helical membrane-spanning segment. Topologically, residues 508-562 (RKKAHNDKYDKMEQADGYGKPTTRKDEMLDPEASFWGEEKRASHTTPVLMEKPYY) are cytoplasmic. The segment at 519–543 (MEQADGYGKPTTRKDEMLDPEASFW) is disordered.

It belongs to the apicomplexan parasites AMA1 family.

The protein localises to the membrane. Involved in parasite invasion of erythrocytes. The polypeptide is Apical membrane antigen 1 (AMA-1) (Plasmodium fragile).